Reading from the N-terminus, the 383-residue chain is UDP-N-acetylglucosamine 2-epimerase (383 aa).

Belongs to the UDP-N-acetylglucosamine 2-epimerase family.

It catalyses the reaction UDP-N-acetyl-alpha-D-glucosamine = UDP-N-acetyl-alpha-D-mannosamine. Its pathway is capsule biogenesis; capsule polysaccharide biosynthesis. In terms of biological role, non-hydrolyzing C2-epimerase involved in the biosynthesis of capsular polysaccharides. Catalyzes the C2 epimerization of UDP-N-acetylglucosamine (UDP-GlcNAc) to form UDP-N-acetylmannosamine (UDP-ManNAc). This is UDP-N-acetylglucosamine 2-epimerase from Campylobacter jejuni.